Consider the following 141-residue polypeptide: MAKKVAAQIKLQLPAGKATPAPPVGPALGQHGVNIMEFCKRFNAETADKAGMILPVVITVYEDKSFTFIIKTPPASFLLKKAAGIESGSSEPKRKIVGKVTRKQIEEIAKIKMPDLNANDLEAAMRIIEGTARSMGIEVVD.

This sequence belongs to the universal ribosomal protein uL11 family. In terms of assembly, part of the ribosomal stalk of the 50S ribosomal subunit. Interacts with L10 and the large rRNA to form the base of the stalk. L10 forms an elongated spine to which L12 dimers bind in a sequential fashion forming a multimeric L10(L12)X complex. In terms of processing, one or more lysine residues are methylated.

Forms part of the ribosomal stalk which helps the ribosome interact with GTP-bound translation factors. The protein is Large ribosomal subunit protein uL11 of Thermotoga neapolitana (strain ATCC 49049 / DSM 4359 / NBRC 107923 / NS-E).